Consider the following 255-residue polypeptide: Ribonuclease HII (255 aa).

An RNase H type-2 domain is found at 72-255; the sequence is AIICGIDEVG…KSFEPIKSLL (184 aa). Residues Asp78, Glu79, and Asp170 each coordinate a divalent metal cation.

This sequence belongs to the RNase HII family. Mn(2+) is required as a cofactor. It depends on Mg(2+) as a cofactor.

The protein resides in the cytoplasm. The enzyme catalyses Endonucleolytic cleavage to 5'-phosphomonoester.. Its function is as follows. Endonuclease that specifically degrades the RNA of RNA-DNA hybrids. This is Ribonuclease HII from Staphylococcus aureus (strain Mu3 / ATCC 700698).